We begin with the raw amino-acid sequence, 270 residues long: 4-hydroxy-tetrahydrodipicolinate reductase (270 aa).

Residues 8–13 (GALGRM), aspartate 34, 102–104 (GTT), and 128–131 (SQNY) each bind NAD(+). Residue histidine 160 is the Proton donor/acceptor of the active site. Histidine 161 contributes to the (S)-2,3,4,5-tetrahydrodipicolinate binding site. Residue lysine 164 is the Proton donor of the active site. Position 170 to 171 (170 to 171 (GT)) interacts with (S)-2,3,4,5-tetrahydrodipicolinate.

This sequence belongs to the DapB family.

It is found in the cytoplasm. The enzyme catalyses (S)-2,3,4,5-tetrahydrodipicolinate + NAD(+) + H2O = (2S,4S)-4-hydroxy-2,3,4,5-tetrahydrodipicolinate + NADH + H(+). It catalyses the reaction (S)-2,3,4,5-tetrahydrodipicolinate + NADP(+) + H2O = (2S,4S)-4-hydroxy-2,3,4,5-tetrahydrodipicolinate + NADPH + H(+). Its pathway is amino-acid biosynthesis; L-lysine biosynthesis via DAP pathway; (S)-tetrahydrodipicolinate from L-aspartate: step 4/4. Functionally, catalyzes the conversion of 4-hydroxy-tetrahydrodipicolinate (HTPA) to tetrahydrodipicolinate. The polypeptide is 4-hydroxy-tetrahydrodipicolinate reductase (Methanococcus maripaludis (strain C5 / ATCC BAA-1333)).